A 314-amino-acid polypeptide reads, in one-letter code: Leucine-rich repeat-containing protein 52 (314 aa).

Positions 1-23 (MSLASGPSSKLLLFSLGMGLVSG) are cleaved as a signal peptide. One can recognise an LRRNT domain in the interval 24 to 53 (SKCPNKCVCQDQEVACIDLHLTEYPADIPL). Residues 24–244 (SKCPNKCVCQ…MCITHLDQQD (221 aa)) are Extracellular-facing. Disulfide bonds link Cys26-Cys32 and Cys30-Cys39. LRR repeat units follow at residues 54–73 (NTRR…ALQL), 78–99 (DLVY…TFIG), 102–123 (RLIY…SFSV), 126–148 (NLVR…VFAN), and 151–172 (SLRY…GFHH). N-linked (GlcNAc...) asparagine glycosylation is found at Asn112, Asn131, and Asn148. An LRRCT domain is found at 184–238 (NPWICNCSFLDFTIHLLVSHMDHPDAQNATCTEPAELKGWPITKVGNPLQYMCIT). 2 cysteine pairs are disulfide-bonded: Cys188–Cys214 and Cys190–Cys236. Residues Asn189 and Asn211 are each glycosylated (N-linked (GlcNAc...) asparagine). The chain crosses the membrane as a helical span at residues 245–265 (YIFLLLIGFCIFAAGTVAAWL). Residues 266–314 (TGVCAVLYQNALRTSSGDDTEDETGSRFANQIFRSNTHLGPIRRFPELI) lie on the Cytoplasmic side of the membrane.

In terms of assembly, interacts with KCNMA1. Interacts with KCNU1; this interaction may be required for LRRC52 stability and changes the channel gating properties. N-glycosylated. In terms of tissue distribution, testis-specific (at protein level). At the mRNA level, also detected in kidney, ventricle, spinal cord and skeletal muscle, although at lower levels compared to testis. Expression in testis at the protein level requires the presence of KCNU1.

It localises to the cell membrane. In terms of biological role, auxiliary protein of the large-conductance, voltage and calcium-activated potassium channel (BK alpha). Modulates gating properties by producing a marked shift in the BK channel's voltage dependence of activation in the hyperpolarizing direction, and in the absence of calcium. KCNU1 channel auxiliary protein. Modulates KCNU1 gating properties, shifting KCNU1 gating to more negative potentials at a given pH. This chain is Leucine-rich repeat-containing protein 52 (Lrrc52), found in Mus musculus (Mouse).